Consider the following 293-residue polypeptide: MSEELENKFLDLCHKYPTGLTQQMIEVSLGHKMEEIVKVINNLIKQGRLMLIQNSDETTSYKEVNPEDQAKFRGLGVEDFLIYQLIEASSNTGAWTRELKNSSGYQQVQITKILKTLESRKLIKSVKSIQSGRKKVYMLYNMEPSREITGGQLYSDQSYDHQYIQIMKMHIKTFVDNKGAVDLADIITYLRKVAEEATSQSLGPEDIQALVNTVIYDGDIEEMRDTRMGAMLGRRSGILYKPTKTPIPVNNFCNMPCGNCPVFDICSDNGLVSPKRCVYFKQYLEQDDESLDF.

The protein belongs to the eukaryotic RPC34/RPC39 RNA polymerase subunit family. In terms of assembly, component of the RNA polymerase III (Pol III) complex.

Its subcellular location is the nucleus. Its function is as follows. DNA-dependent RNA polymerase catalyzes the transcription of DNA into RNA using the four ribonucleoside triphosphates as substrates. Specific peripheric component of RNA polymerase III which synthesizes small RNAs, such as 5S rRNA and tRNAs. May direct RNA Pol III binding to the TFIIIB-DNA complex. The sequence is that of DNA-directed RNA polymerase III subunit rpc6 (polr3f) from Dictyostelium discoideum (Social amoeba).